A 160-amino-acid chain; its full sequence is MKIRIGHGFDVHKFGADRPLILCGIEVPYETGLIAHSDGDVVLHAISDAILGAMALGDIGKHFPDTDAAYEGADSRVLLRHCFKLAREHGFAIGNLDVTIIAQAPKMLPHIEAMRAVLADDLQTELNNINVKATTTEKLGFTGRKEGIAVEAVVLMENVK.

A divalent metal cation is bound by residues Asp-10 and His-12. 4-CDP-2-C-methyl-D-erythritol 2-phosphate contacts are provided by residues 10–12 (DVH) and 36–37 (HS). A divalent metal cation is bound at residue His-44. Residues 58–60 (DIG), 63–67 (FPDTD), 102–108 (AQAPKML), 134–137 (TTTE), Phe-141, and Arg-144 each bind 4-CDP-2-C-methyl-D-erythritol 2-phosphate.

It belongs to the IspF family. As to quaternary structure, homotrimer. It depends on a divalent metal cation as a cofactor.

It carries out the reaction 4-CDP-2-C-methyl-D-erythritol 2-phosphate = 2-C-methyl-D-erythritol 2,4-cyclic diphosphate + CMP. It participates in isoprenoid biosynthesis; isopentenyl diphosphate biosynthesis via DXP pathway; isopentenyl diphosphate from 1-deoxy-D-xylulose 5-phosphate: step 4/6. Involved in the biosynthesis of isopentenyl diphosphate (IPP) and dimethylallyl diphosphate (DMAPP), two major building blocks of isoprenoid compounds. Catalyzes the conversion of 4-diphosphocytidyl-2-C-methyl-D-erythritol 2-phosphate (CDP-ME2P) to 2-C-methyl-D-erythritol 2,4-cyclodiphosphate (ME-CPP) with a corresponding release of cytidine 5-monophosphate (CMP). This Shewanella amazonensis (strain ATCC BAA-1098 / SB2B) protein is 2-C-methyl-D-erythritol 2,4-cyclodiphosphate synthase.